We begin with the raw amino-acid sequence, 317 residues long: Ataxin-3 homolog (317 aa).

Residues 7–178 (INSIFFEHQE…RSDADDLISL (172 aa)) form the Josephin domain. The active-site Nucleophile is the Cys-20. His-117 functions as the Proton acceptor in the catalytic mechanism. Residue Asn-132 is part of the active site. UIM domains follow at residues 219 to 239 (SQEEKDLAIAFAMSMETKDGS) and 247 to 264 (EIDEENLRKAIELSQAPG). Residues 254–317 (RKAIELSQAP…KKKEERNDEK (64 aa)) are disordered. The segment covering 276 to 293 (RSRSSTPPGASEPFSNAE) has biased composition (polar residues). Positions 294-317 (QQRRDRQKFLERFEKKKEERNDEK) are enriched in basic and acidic residues. The interaction with cdc-48.1 and cdc-48.2 stretch occupies residues 296 to 299 (RRDR).

As to quaternary structure, forms a complex composed of deubiquitinating enzyme atx-3, adapter ubxn-5 and cdc-48.1. Forms a complex composed of deubiquitinating enzyme atx-3, E4 ubiquitin-protein ligase ufd-2 and cdc-48.1. Interacts (via RRDR motif) with cdc-48.1 (via N-terminus) and cdc-48.2 (via N-terminus); the interaction with cdc-48.1 is not required for atx-3 enzymatic activity. Interacts (via C-terminus) with ubxn-5. May interact with ned-8. Expressed in germline (at protein level). Expressed in spermatheca, pharynx, dorsal and ventral cords, some head neurons, hypodermis, body wall muscles and coelomocytes.

It is found in the cytoplasm. It localises to the nucleus. The protein resides in the nucleolus. The enzyme catalyses Thiol-dependent hydrolysis of ester, thioester, amide, peptide and isopeptide bonds formed by the C-terminal Gly of ubiquitin (a 76-residue protein attached to proteins as an intracellular targeting signal).. In terms of biological role, acts as a chain editing deubiquitinating enzyme that binds and cleaves 'Lys-48'-linked polyubiquitin chains, with a preference for chains containing four or more ubiquitin molecules thereby modulating protein degradation by the ubiquitin-proteasome pathway. Probably by regulating the IGF-1-insulin-like pathway, regulates lifespan. Regulates germline DNA double-strand-break repair and apoptosis in response to DNA damage by recruiting E4 ubiquitin-protein ligase ufd-2 to DNA repair foci. Interacts with key regulators of transcription and represses transcription. Acts as a histone-binding protein that regulates transcription. The chain is Ataxin-3 homolog (atx-3) from Caenorhabditis elegans.